The sequence spans 403 residues: Sex hormone-binding globulin (403 aa).

The N-terminal stretch at methionine 1–threonine 30 is a signal peptide. Laminin G-like domains follow at residues lysine 46–cysteine 218 and glycine 225–cysteine 391. A disulfide bridge connects residues cysteine 194 and cysteine 218. Asparagine 274 carries N-linked (GlcNAc...) asparagine glycosylation. Cysteine 363 and cysteine 391 are joined by a disulfide. The N-linked (GlcNAc...) asparagine glycan is linked to asparagine 397.

As to quaternary structure, homodimer. As to expression, isoform 2 is only expressed in the liver.

The protein resides in the secreted. Its function is as follows. Functions as an androgen transport protein, but may also be involved in receptor mediated processes. Each dimer binds one molecule of steroid. Specific for 5-alpha-dihydrotestosterone, testosterone, and 17-beta-estradiol. Regulates the plasma metabolic clearance rate of steroid hormones by controlling their plasma concentration. This is Sex hormone-binding globulin (Shbg) from Rattus norvegicus (Rat).